We begin with the raw amino-acid sequence, 237 residues long: Uridylate kinase (237 aa).

11–14 (KLSG) lines the ATP pocket. G53 contacts UMP. Residues G54 and R58 each contribute to the ATP site. Residues D73 and 134-141 (TGNPFFTT) contribute to the UMP site. 3 residues coordinate ATP: T161, Y167, and D170.

The protein belongs to the UMP kinase family. In terms of assembly, homohexamer.

It is found in the cytoplasm. The catalysed reaction is UMP + ATP = UDP + ADP. The protein operates within pyrimidine metabolism; CTP biosynthesis via de novo pathway; UDP from UMP (UMPK route): step 1/1. With respect to regulation, inhibited by UTP. Its function is as follows. Catalyzes the reversible phosphorylation of UMP to UDP. In Nitrosomonas europaea (strain ATCC 19718 / CIP 103999 / KCTC 2705 / NBRC 14298), this protein is Uridylate kinase.